We begin with the raw amino-acid sequence, 370 residues long: Histidinol-phosphate aminotransferase (370 aa).

Lys-223 bears the N6-(pyridoxal phosphate)lysine mark.

Belongs to the class-II pyridoxal-phosphate-dependent aminotransferase family. Histidinol-phosphate aminotransferase subfamily. Homodimer. The cofactor is pyridoxal 5'-phosphate.

It catalyses the reaction L-histidinol phosphate + 2-oxoglutarate = 3-(imidazol-4-yl)-2-oxopropyl phosphate + L-glutamate. Its pathway is amino-acid biosynthesis; L-histidine biosynthesis; L-histidine from 5-phospho-alpha-D-ribose 1-diphosphate: step 7/9. The sequence is that of Histidinol-phosphate aminotransferase from Methylobacterium sp. (strain 4-46).